The sequence spans 200 residues: Ribonuclease HII (200 aa).

Positions 9–198 (ALIAGVDEVG…VQRVLAQAKG (190 aa)) constitute an RNase H type-2 domain. The a divalent metal cation site is built by Asp-15, Glu-16, and Asp-107.

Belongs to the RNase HII family. It depends on Mn(2+) as a cofactor. Mg(2+) serves as cofactor.

Its subcellular location is the cytoplasm. The enzyme catalyses Endonucleolytic cleavage to 5'-phosphomonoester.. Its function is as follows. Endonuclease that specifically degrades the RNA of RNA-DNA hybrids. In Pseudoalteromonas translucida (strain TAC 125), this protein is Ribonuclease HII.